The primary structure comprises 361 residues: Histidinol-phosphate aminotransferase (361 aa).

Position 221 is an N6-(pyridoxal phosphate)lysine (Lys221).

The protein belongs to the class-II pyridoxal-phosphate-dependent aminotransferase family. Histidinol-phosphate aminotransferase subfamily. Pyridoxal 5'-phosphate is required as a cofactor.

The enzyme catalyses L-histidinol phosphate + 2-oxoglutarate = 3-(imidazol-4-yl)-2-oxopropyl phosphate + L-glutamate. It participates in amino-acid biosynthesis; L-histidine biosynthesis; L-histidine from 5-phospho-alpha-D-ribose 1-diphosphate: step 7/9. This chain is Histidinol-phosphate aminotransferase, found in Methanocella arvoryzae (strain DSM 22066 / NBRC 105507 / MRE50).